The primary structure comprises 237 residues: Proteasome subunit alpha type-5-B (237 aa).

The residue at position 1 (M1) is an N-acetylmethionine. Glycyl lysine isopeptide (Lys-Gly) (interchain with G-Cter in ubiquitin) cross-links involve residues K43, K66, and K185.

Belongs to the peptidase T1A family. In terms of assembly, component of the 20S core complex of the 26S proteasome. The 26S proteasome is composed of a core protease (CP), known as the 20S proteasome, capped at one or both ends by the 19S regulatory particle (RP/PA700). The 20S proteasome core is composed of 28 subunits that are arranged in four stacked rings, resulting in a barrel-shaped structure. The two end rings are each formed by seven alpha subunits, and the two central rings are each formed by seven beta subunits. The catalytic chamber with the active sites is on the inside of the barrel.

The protein resides in the cytoplasm. It localises to the nucleus. Functionally, the proteasome is a multicatalytic proteinase complex which is characterized by its ability to cleave peptides with Arg, Phe, Tyr, Leu, and Glu adjacent to the leaving group at neutral or slightly basic pH. The proteasome has an ATP-dependent proteolytic activity. This Arabidopsis thaliana (Mouse-ear cress) protein is Proteasome subunit alpha type-5-B (PAE2).